The primary structure comprises 450 residues: Phosphoglucosamine mutase (450 aa).

S97 serves as the catalytic Phosphoserine intermediate. Mg(2+) is bound by residues S97, D236, D238, and D240. S97 is modified (phosphoserine).

Belongs to the phosphohexose mutase family. Requires Mg(2+) as cofactor. In terms of processing, activated by phosphorylation.

The catalysed reaction is alpha-D-glucosamine 1-phosphate = D-glucosamine 6-phosphate. Its function is as follows. Catalyzes the conversion of glucosamine-6-phosphate to glucosamine-1-phosphate. The sequence is that of Phosphoglucosamine mutase from Prochlorococcus marinus (strain MIT 9215).